Here is a 178-residue protein sequence, read N- to C-terminus: Large ribosomal subunit protein uL5 (178 aa).

Belongs to the universal ribosomal protein uL5 family. Part of the 50S ribosomal subunit; part of the 5S rRNA/L5/L18/L25 subcomplex. Contacts the 5S rRNA and the P site tRNA. Forms a bridge to the 30S subunit in the 70S ribosome.

Functionally, this is one of the proteins that bind and probably mediate the attachment of the 5S RNA into the large ribosomal subunit, where it forms part of the central protuberance. In the 70S ribosome it contacts protein S13 of the 30S subunit (bridge B1b), connecting the 2 subunits; this bridge is implicated in subunit movement. Contacts the P site tRNA; the 5S rRNA and some of its associated proteins might help stabilize positioning of ribosome-bound tRNAs. The sequence is that of Large ribosomal subunit protein uL5 from Psychrobacter sp. (strain PRwf-1).